The primary structure comprises 202 residues: Imidazoleglycerol-phosphate dehydratase (202 aa).

The protein belongs to the imidazoleglycerol-phosphate dehydratase family.

The protein resides in the cytoplasm. It catalyses the reaction D-erythro-1-(imidazol-4-yl)glycerol 3-phosphate = 3-(imidazol-4-yl)-2-oxopropyl phosphate + H2O. It functions in the pathway amino-acid biosynthesis; L-histidine biosynthesis; L-histidine from 5-phospho-alpha-D-ribose 1-diphosphate: step 6/9. This chain is Imidazoleglycerol-phosphate dehydratase, found in Mycolicibacterium gilvum (strain PYR-GCK) (Mycobacterium gilvum (strain PYR-GCK)).